The primary structure comprises 1577 residues: High molecular weight form of myosin-1 (1577 aa).

A Myosin motor domain is found at 75-751 (KSVDDLVQMD…EQRGLELQRN (677 aa)). The residue at position 119 (Lys-119) is an N6,N6,N6-trimethyllysine. 168-175 (GESGAGKT) contributes to the ATP binding site. 2 actin-binding regions span residues 628–650 (LDSL…KPNS) and 730–744 (QVGK…PEQR). In terms of domain architecture, IQ spans 755 to 782 (ERVTIQIQAGVRRMFARRLYKRMRAIKP). Positions 1261-1401 (WTKSPIPTSL…PNVEQILAAK (141 aa)) constitute a MyTH4 domain. Disordered regions lie at residues 1442–1466 (SRPA…QQAA) and 1483–1516 (QQQQ…LPAE). Composition is skewed to low complexity over residues 1444–1466 (PAQA…QQAA) and 1483–1497 (QQQQ…QQQA). The SH3 domain maps to 1519–1577 (EEYKQVEVVYDYDGGGDAQRLVLVKGAIITVIKEYEGWAYGSTDDGQVGLYPINYTRPI).

The protein belongs to the TRAFAC class myosin-kinesin ATPase superfamily. Myosin family. As to quaternary structure, myosin I heavy chain is single-headed.

The polypeptide is High molecular weight form of myosin-1 (Acanthamoeba castellanii (Amoeba)).